The following is a 428-amino-acid chain: Glutamate-1-semialdehyde 2,1-aminomutase (428 aa).

Position 265 is an N6-(pyridoxal phosphate)lysine (Lys-265).

Belongs to the class-III pyridoxal-phosphate-dependent aminotransferase family. HemL subfamily. As to quaternary structure, homodimer. It depends on pyridoxal 5'-phosphate as a cofactor.

The protein resides in the cytoplasm. It catalyses the reaction (S)-4-amino-5-oxopentanoate = 5-aminolevulinate. It functions in the pathway porphyrin-containing compound metabolism; protoporphyrin-IX biosynthesis; 5-aminolevulinate from L-glutamyl-tRNA(Glu): step 2/2. The chain is Glutamate-1-semialdehyde 2,1-aminomutase from Methylobacillus flagellatus (strain ATCC 51484 / DSM 6875 / VKM B-1610 / KT).